Reading from the N-terminus, the 343-residue chain is Uroporphyrinogen decarboxylase (343 aa).

Residues 23–27 (RQAGR), Phe42, Asp73, Tyr150, Ser205, and His322 each bind substrate.

The protein belongs to the uroporphyrinogen decarboxylase family. Homodimer.

The protein localises to the cytoplasm. The enzyme catalyses uroporphyrinogen III + 4 H(+) = coproporphyrinogen III + 4 CO2. The protein operates within porphyrin-containing compound metabolism; protoporphyrin-IX biosynthesis; coproporphyrinogen-III from 5-aminolevulinate: step 4/4. With respect to regulation, inhibited by N-ethyl-maleimide and phenylglyoxal. Catalyzes the decarboxylation of four acetate groups of uroporphyrinogen-III to yield coproporphyrinogen-III. The sequence is that of Uroporphyrinogen decarboxylase (hemE) from Cereibacter sphaeroides (strain ATCC 17023 / DSM 158 / JCM 6121 / CCUG 31486 / LMG 2827 / NBRC 12203 / NCIMB 8253 / ATH 2.4.1.) (Rhodobacter sphaeroides).